The sequence spans 363 residues: 3-dehydroquinate synthase (363 aa).

Residues 134–135 (TT), lysine 147, and lysine 156 each bind NAD(+). Residues glutamate 189, histidine 254, and histidine 271 each coordinate Zn(2+).

It belongs to the sugar phosphate cyclases superfamily. Dehydroquinate synthase family. Co(2+) is required as a cofactor. It depends on Zn(2+) as a cofactor. NAD(+) serves as cofactor.

The protein localises to the cytoplasm. It catalyses the reaction 7-phospho-2-dehydro-3-deoxy-D-arabino-heptonate = 3-dehydroquinate + phosphate. It participates in metabolic intermediate biosynthesis; chorismate biosynthesis; chorismate from D-erythrose 4-phosphate and phosphoenolpyruvate: step 2/7. Its function is as follows. Catalyzes the conversion of 3-deoxy-D-arabino-heptulosonate 7-phosphate (DAHP) to dehydroquinate (DHQ). The chain is 3-dehydroquinate synthase from Prochlorococcus marinus (strain MIT 9215).